We begin with the raw amino-acid sequence, 572 residues long: Sulfite reductase [NADPH] hemoprotein beta-component (572 aa).

Residues Cys-436, Cys-442, Cys-481, and Cys-485 each coordinate [4Fe-4S] cluster. Position 485 (Cys-485) interacts with siroheme.

This sequence belongs to the nitrite and sulfite reductase 4Fe-4S domain family. Alpha(8)-beta(8). The alpha component is a flavoprotein, the beta component is a hemoprotein. Requires siroheme as cofactor. It depends on [4Fe-4S] cluster as a cofactor.

The catalysed reaction is hydrogen sulfide + 3 NADP(+) + 3 H2O = sulfite + 3 NADPH + 4 H(+). Its pathway is sulfur metabolism; hydrogen sulfide biosynthesis; hydrogen sulfide from sulfite (NADPH route): step 1/1. In terms of biological role, component of the sulfite reductase complex that catalyzes the 6-electron reduction of sulfite to sulfide. This is one of several activities required for the biosynthesis of L-cysteine from sulfate. This is Sulfite reductase [NADPH] hemoprotein beta-component from Bacillus pumilus (strain SAFR-032).